The following is an 860-amino-acid chain: DNA gyrase subunit A (860 aa).

In terms of domain architecture, Topo IIA-type catalytic spans 34-503; the sequence is LPDARDGLKP…EDGELIDTDL (470 aa). The O-(5'-phospho-DNA)-tyrosine intermediate role is filled by Y122. Residues 530 to 536 carry the GyrA-box motif; sequence QNRATRG.

The protein belongs to the type II topoisomerase GyrA/ParC subunit family. As to quaternary structure, heterotetramer, composed of two GyrA and two GyrB chains. In the heterotetramer, GyrA contains the active site tyrosine that forms a transient covalent intermediate with DNA, while GyrB binds cofactors and catalyzes ATP hydrolysis.

The protein resides in the cytoplasm. It catalyses the reaction ATP-dependent breakage, passage and rejoining of double-stranded DNA.. In terms of biological role, a type II topoisomerase that negatively supercoils closed circular double-stranded (ds) DNA in an ATP-dependent manner to modulate DNA topology and maintain chromosomes in an underwound state. Negative supercoiling favors strand separation, and DNA replication, transcription, recombination and repair, all of which involve strand separation. Also able to catalyze the interconversion of other topological isomers of dsDNA rings, including catenanes and knotted rings. Type II topoisomerases break and join 2 DNA strands simultaneously in an ATP-dependent manner. In Synechocystis sp. (strain ATCC 27184 / PCC 6803 / Kazusa), this protein is DNA gyrase subunit A.